Here is a 660-residue protein sequence, read N- to C-terminus: MRSCVRTASSVLQSWRAHTVLRNGCPLPSRTLERLPRLARSYAMAYKPQGELEKRIAEIPIERYRNFCIVAHVDHGKSTLSDRLLELTGTIQPGGNKQILDRLDVERERGITVKAQTCSMIYNYQGDDYLLHLVDTPGHVDFRAEVSRSYASCGGALLLVDASQGVQAQTVANFYLAFSQGLTLVPVLNKVDLPHADPPRVLEQMHDTFELDPEAAVLVSAKTGLNVASLLPAVVEKIPAPVGDLSKPLRMLLVDSWYDVYKGVILLVRVFDGQVRPGDTIRSFATGLKYIVGEVGIMYPDQTPQTVLKAGQVGYIHFNPGMKKSQEAKVGDTYTTLGSEKLVEPYPGFEEPKSMVFVAAYPTDQDNHEHLEDSIEQITLNDRSVTLQKESSDALGAGWRLGFLGTLHCSVFEDRLRQEHGANIIITPPSVPFKVIWRDGTESIITNPNEFPDQDQAHFRVQEVHEPYVQATITLPDEYLGEVIKLCESNRGEQKELTFFTATQVILKYDIPLSHLVDDFFGKLKGATKGYASLDYEDAGFHKSSIVKLNLLVNGAPVDAVSRVLHTSQVDKVGRAWVEKFKVHVERQMFEVIIQAAAGRRIVARATIKPFRKDVLAKLHASDLSRRRKLLEKQKEGRKKLRAVGSVVIEQEAFQKFLAK.

Residues 1-42 (MRSCVRTASSVLQSWRAHTVLRNGCPLPSRTLERLPRLARSY) constitute a mitochondrion transit peptide. Residues 62 to 242 (ERYRNFCIVA…AVVEKIPAPV (181 aa)) form the tr-type G domain. GTP contacts are provided by residues 71 to 78 (AHVDHGKS), 135 to 139 (DTPGH), and 189 to 192 (NKVD).

This sequence belongs to the TRAFAC class translation factor GTPase superfamily. Classic translation factor GTPase family. LepA subfamily.

Its subcellular location is the mitochondrion inner membrane. It catalyses the reaction GTP + H2O = GDP + phosphate + H(+). Promotes mitochondrial protein synthesis. May act as a fidelity factor of the translation reaction, by catalyzing a one-codon backward translocation of tRNAs on improperly translocated ribosomes. Binds to mitochondrial ribosomes in a GTP-dependent manner. This Phaeosphaeria nodorum (strain SN15 / ATCC MYA-4574 / FGSC 10173) (Glume blotch fungus) protein is Translation factor GUF1, mitochondrial.